The following is a 139-amino-acid chain: D-ribose pyranase (139 aa).

Catalysis depends on His-20, which acts as the Proton donor. Substrate-binding positions include Asp-28, His-106, and 128–130 (YAN).

This sequence belongs to the RbsD / FucU family. RbsD subfamily. In terms of assembly, homodecamer.

The protein localises to the cytoplasm. It carries out the reaction beta-D-ribopyranose = beta-D-ribofuranose. The protein operates within carbohydrate metabolism; D-ribose degradation; D-ribose 5-phosphate from beta-D-ribopyranose: step 1/2. Functionally, catalyzes the interconversion of beta-pyran and beta-furan forms of D-ribose. This chain is D-ribose pyranase, found in Actinobacillus pleuropneumoniae serotype 5b (strain L20).